A 355-amino-acid chain; its full sequence is uncharacterized protein (355 aa).

Residues 1 to 21 (MQKKVLFNDIVFVCFPITDNG) form the signal peptide. Asn20, Asn78, Asn87, Asn156, Asn159, and Asn274 each carry an N-linked (GlcNAc...) asparagine; by host glycan. The Virion surface portion of the chain corresponds to 22 to 331 (SIIISDIGYS…SSTSFFSRYG (310 aa)). The tract at residues 288–317 (GSKSTPNGPNGPTPTPSNGPNGPTPVPGIP) is disordered. Residues 296–317 (PNGPTPTPSNGPNGPTPVPGIP) are compositionally biased toward pro residues. Asn320 is a glycosylation site (N-linked (GlcNAc...) asparagine; by host). Residues 332–352 (LWIIIAIILLIVIISAVGIYF) form a helical membrane-spanning segment. Over 353–355 (YLR) the chain is Intravirion.

Its subcellular location is the host membrane. The protein localises to the virion. This is an uncharacterized protein from Acanthamoeba polyphaga mimivirus (APMV).